An 830-amino-acid chain; its full sequence is G-type lectin S-receptor-like serine/threonine-protein kinase SD1-13 (830 aa).

The signal sequence occupies residues 1–21 (MGCLLILLLTLICFSLRLCLA). Residues 22–145 (TDVITFSSEF…TNTGDEILWE (124 aa)) enclose the Bulb-type lectin domain. Topologically, residues 22-434 (TDVITFSSEF…SEFKKRTNRS (413 aa)) are extracellular. N-linked (GlcNAc...) asparagine glycosylation is found at Asn40, Asn53, and Asn82. One can recognise an EGF-like; atypical domain in the interval 283 to 321 (PSTKCDTYATCGQFASCRFNPGSTPPCMCIRGFKPQSYA). 2 disulfide bridges follow: Cys287-Cys299 and Cys293-Cys309. N-linked (GlcNAc...) asparagine glycosylation is found at Asn327, Asn384, and Asn432. A PAN domain is found at 340–423 (CESRDNNDGS…TGVVFYIRLA (84 aa)). 2 disulfide bridges follow: Cys377/Cys398 and Cys381/Cys387. The helical transmembrane segment at 435–455 (IVITVTLLVGAFLFAGTVVLA) threads the bilayer. Residues 456 to 830 (LWKIAKHREK…NVSLTKITGR (375 aa)) are Cytoplasmic-facing. Positions 512–798 (FSITNKLGQG…NLPEPKQPAF (287 aa)) constitute a Protein kinase domain. Residues 518–526 (LGQGGFGAV) and Lys540 each bind ATP. Residue Thr545 is modified to Phosphothreonine. Residues Ser546 and Ser561 each carry the phosphoserine modification. The interval 601-618 (VKQRLLDWKTRFNIIDGI) is caM-binding. The Proton acceptor role is filled by Asp637. 3 positions are modified to phosphoserine: Ser641, Ser654, and Ser670. A Phosphothreonine modification is found at Thr671. Ser714, Ser715, Ser726, Ser805, Ser809, Ser810, Ser813, Ser818, and Ser823 each carry phosphoserine. The interval 789–830 (NLPEPKQPAFIPRRGTSEVESSGQSDPRASINNVSLTKITGR) is disordered. Residues 806-830 (EVESSGQSDPRASINNVSLTKITGR) show a composition bias toward polar residues. A phosphothreonine mark is found at Thr825 and Thr828.

The protein belongs to the protein kinase superfamily. Ser/Thr protein kinase family. Interacts with PUB9, PUB13 and PUB14. Binds to calmodulin (CaM) in a Ca(2+)-dependent manner. In terms of processing, autophosphorylated. Mostly expressed in rosette leaves, and, to a lower extent, in cauline leaves and stems.

It localises to the cell membrane. The catalysed reaction is L-seryl-[protein] + ATP = O-phospho-L-seryl-[protein] + ADP + H(+). It carries out the reaction L-threonyl-[protein] + ATP = O-phospho-L-threonyl-[protein] + ADP + H(+). Its function is as follows. Receptor-like serine/threonine-protein kinase that represses the disease resistance signaling pathway triggered in response to bacterial pathogen such as Pseudomonas syringae pv. tomato. The polypeptide is G-type lectin S-receptor-like serine/threonine-protein kinase SD1-13 (SD113) (Arabidopsis thaliana (Mouse-ear cress)).